The following is a 185-amino-acid chain: ATP synthase subunit b, chloroplastic (185 aa).

Residues 7–29 (SFVYLVGHCPFAGSFAFNTDILA) form a helical membrane-spanning segment.

This sequence belongs to the ATPase B chain family. In terms of assembly, F-type ATPases have 2 components, F(1) - the catalytic core - and F(0) - the membrane proton channel. F(1) has five subunits: alpha(3), beta(3), gamma(1), delta(1), epsilon(1). F(0) has four main subunits: a(1), b(1), b'(1) and c(10-14). The alpha and beta chains form an alternating ring which encloses part of the gamma chain. F(1) is attached to F(0) by a central stalk formed by the gamma and epsilon chains, while a peripheral stalk is formed by the delta, b and b' chains.

The protein resides in the plastid. Its subcellular location is the chloroplast thylakoid membrane. In terms of biological role, f(1)F(0) ATP synthase produces ATP from ADP in the presence of a proton or sodium gradient. F-type ATPases consist of two structural domains, F(1) containing the extramembraneous catalytic core and F(0) containing the membrane proton channel, linked together by a central stalk and a peripheral stalk. During catalysis, ATP synthesis in the catalytic domain of F(1) is coupled via a rotary mechanism of the central stalk subunits to proton translocation. Its function is as follows. Component of the F(0) channel, it forms part of the peripheral stalk, linking F(1) to F(0). This chain is ATP synthase subunit b, chloroplastic, found in Dioscorea elephantipes (Elephant's foot yam).